A 912-amino-acid polypeptide reads, in one-letter code: Rho guanine nucleotide exchange factor 1 (912 aa).

An RGSL domain is found at 41 to 232 (EQNSQFQSLE…GLYMRHLGVR (192 aa)). Positions 248-413 (KVMGNRRSDE…PDTLHSLPKS (166 aa)) are disordered. Over residues 283-313 (DFRHLKAEVDAEKPGATDRKGGVGMPSRDRN) the composition is skewed to basic and acidic residues. A compositionally biased stretch (acidic residues) spans 365–381 (STDEGAETESPEPGDEG). Phosphoserine is present on residues Ser-374 and Ser-409. The 190-residue stretch at 416 to 605 (KRQEVISELL…REILHHVNQA (190 aa)) folds into the DH domain. A PH domain is found at 647 to 760 (KLVHEGPLTW…WCALITETAG (114 aa)). Thr-695 carries the post-translational modification Phosphothreonine. Tyr-738 carries the phosphotyrosine; by JAK2 modification. Disordered stretches follow at residues 763-802 (KVPAPASRPKPRPSPSSTREPLLSSSENGNGGRETSPADA) and 841-865 (AEEDNGAGPPRDGDGVPGGGPLSPA). The span at 777-789 (PSSTREPLLSSSE) shows a compositional bias: low complexity. The residue at position 863 (Ser-863) is a Phosphoserine. Residues 865–896 (ARTQEIQENLLSLEETMKQLEELEEEFCRLRP) are a coiled coil.

Interacts with RHOA, GNA12 and GNA13. Homooligomerizes through the coiled coil region. May interact with CCPG1. Interacts with CTNNAL1. Phosphorylated by PKCA. Angiotensin-2 induced Tyr-738 phosphorylation is mediated by JAK2. Ubiquitously expressed.

It localises to the cytoplasm. Its subcellular location is the membrane. In terms of biological role, seems to play a role in the regulation of RhoA GTPase by guanine nucleotide-binding alpha-12 (GNA12) and alpha-13 (GNA13) subunits. Acts as a GTPase-activating protein (GAP) for GNA12 and GNA13, and as guanine nucleotide exchange factor (GEF) for RhoA GTPase. Activated G alpha 13/GNA13 stimulates the RhoGEF activity through interaction with the RGS-like domain. This GEF activity is inhibited by binding to activated GNA12. Mediates angiotensin-2-induced RhoA activation. In lymphoid follicles, may trigger activation of GNA13 as part of S1PR2-dependent signaling pathway that leads to inhibition of germinal center (GC) B cell growth and migration outside the GC niche. This Homo sapiens (Human) protein is Rho guanine nucleotide exchange factor 1 (ARHGEF1).